The chain runs to 185 residues: Elongation factor P (185 aa).

It belongs to the elongation factor P family.

The protein localises to the cytoplasm. Its pathway is protein biosynthesis; polypeptide chain elongation. Its function is as follows. Involved in peptide bond synthesis. Stimulates efficient translation and peptide-bond synthesis on native or reconstituted 70S ribosomes in vitro. Probably functions indirectly by altering the affinity of the ribosome for aminoacyl-tRNA, thus increasing their reactivity as acceptors for peptidyl transferase. This Clostridium botulinum (strain ATCC 19397 / Type A) protein is Elongation factor P.